A 586-amino-acid chain; its full sequence is uncharacterized protein (586 aa).

Coiled-coil stretches lie at residues 183 to 293 and 331 to 400; these read THTE…ELEN and FKDK…DKKN.

This is an uncharacterized protein from Bacillus subtilis (strain 168).